A 167-amino-acid polypeptide reads, in one-letter code: 6,7-dimethyl-8-ribityllumazine synthase (167 aa).

5-amino-6-(D-ribitylamino)uracil is bound by residues Phe-26, 60-62, and 89-91; these read AFE and AVI. Residue 94–95 participates in (2S)-2-hydroxy-3-oxobutyl phosphate binding; it reads ET. The Proton donor role is filled by His-97. Residue Phe-122 coordinates 5-amino-6-(D-ribitylamino)uracil. A (2S)-2-hydroxy-3-oxobutyl phosphate-binding site is contributed by Arg-136.

It belongs to the DMRL synthase family. As to quaternary structure, forms an icosahedral capsid composed of 60 subunits, arranged as a dodecamer of pentamers.

It catalyses the reaction (2S)-2-hydroxy-3-oxobutyl phosphate + 5-amino-6-(D-ribitylamino)uracil = 6,7-dimethyl-8-(1-D-ribityl)lumazine + phosphate + 2 H2O + H(+). The protein operates within cofactor biosynthesis; riboflavin biosynthesis; riboflavin from 2-hydroxy-3-oxobutyl phosphate and 5-amino-6-(D-ribitylamino)uracil: step 1/2. Catalyzes the formation of 6,7-dimethyl-8-ribityllumazine by condensation of 5-amino-6-(D-ribitylamino)uracil with 3,4-dihydroxy-2-butanone 4-phosphate. This is the penultimate step in the biosynthesis of riboflavin. This is 6,7-dimethyl-8-ribityllumazine synthase from Vesicomyosocius okutanii subsp. Calyptogena okutanii (strain HA).